The chain runs to 1381 residues: Hepatocyte growth factor receptor (1381 aa).

A signal peptide spans 1-24; it reads MKAPAVLAPGILVLLFTLVQKSDG. Residues 25–934 are Extracellular-facing; it reads ECKEALVKSE…VQPDQNFTGL (910 aa). Residues 27-515 form the Sema domain; it reads KEALVKSEMN…TGKKITKIPL (489 aa). Asn-45 is a glycosylation site (N-linked (GlcNAc...) asparagine). 4 cysteine pairs are disulfide-bonded: Cys-95–Cys-101, Cys-98–Cys-160, Cys-133–Cys-141, and Cys-172–Cys-175. N-linked (GlcNAc...) asparagine glycosylation is present at Asn-106. 2 N-linked (GlcNAc...) asparagine glycosylation sites follow: Asn-202 and Asn-358. Cystine bridges form between Cys-298/Cys-363 and Cys-385/Cys-397. N-linked (GlcNAc...) asparagine glycosylation is found at Asn-399, Asn-405, and Asn-449. Disulfide bonds link Cys-520–Cys-538, Cys-526–Cys-561, Cys-529–Cys-545, and Cys-541–Cys-551. An N-linked (GlcNAc...) asparagine glycan is attached at Asn-553. 3 IPT/TIG domains span residues 563–655, 657–739, and 742–836; these read PTIY…FSYV, PIIT…FSYR, and PIVY…LIYV. A glycan (O-linked (Man) threonine) is linked at Thr-582. Asn-607 and Asn-635 each carry an N-linked (GlcNAc...) asparagine glycan. O-linked (Man) threonine glycosylation is found at Thr-676 and Thr-761. Residues Asn-785, Asn-879, and Asn-930 are each glycosylated (N-linked (GlcNAc...) asparagine). The helical transmembrane segment at 935–955 threads the bilayer; that stretch reads IVGVVSISIILLLLLGLFLWL. Over 956–1381 the chain is Cytoplasmic; the sequence is KRRKQIKDLG…QDNVDGEVDT (426 aa). Ser-966 bears the Phosphoserine mark. Thr-977 carries the phosphothreonine modification. Phosphoserine occurs at positions 990, 997, and 1000. Residue Tyr-1003 is modified to Phosphotyrosine. The region spanning 1078–1345 is the Protein kinase domain; sequence VHFNEVIGRG…RISAIFSTFI (268 aa). Residues 1084–1092 and Lys-1110 each bind ATP; that span reads IGRGHFGCV. Asp-1204 (proton acceptor) is an active-site residue. Residues 1212 to 1381 form an interaction with RANBP9 region; that stretch reads LDEKFTVKVA…QDNVDGEVDT (170 aa). Phosphotyrosine is present on Tyr-1230. Tyr-1234 and Tyr-1235 each carry phosphotyrosine; by autocatalysis. Position 1289 is a phosphothreonine (Thr-1289). Residues 1320 to 1359 form an interaction with MUC20 region; the sequence is WHPKAELRPSFSELVSRISAIFSTFIGEHYVHVNATYVNV. Tyr-1349 and Tyr-1356 each carry phosphotyrosine; by autocatalysis. Tyr-1365 bears the Phosphotyrosine mark.

It belongs to the protein kinase superfamily. Tyr protein kinase family. As to quaternary structure, heterodimer made of an alpha chain (50 kDa) and a beta chain (145 kDa) which are disulfide linked. Binds PLXNB1. Interacts when phosphorylated with downstream effectors including STAT3, PIK3R1, SRC, PCLG1, GRB2 and GAB1. Interacts with SPSB1, SPSB2 and SPSB4. Interacts with INPP5D/SHIP1. When phosphorylated at Tyr-1356, interacts with INPPL1/SHIP2. Interacts with RANBP9 and RANBP10, as well as SPSB1, SPSB2, SPSB3 and SPSB4. SPSB1 binding occurs in the presence and in the absence of HGF, however HGF treatment has a positive effect on this interaction. Interacts with MUC20; prevents interaction with GRB2 and suppresses hepatocyte growth factor-induced cell proliferation. Interacts with GRB10. Interacts with PTPN1 and PTPN2. Interacts with HSP90AA1 and HSP90AB1; the interaction suppresses MET kinase activity. Interacts with tensin TNS3. Interacts (when phosphorylated) with tensin TNS4 (via SH2 domain); the interaction increases MET protein stability by inhibiting MET endocytosis and subsequent lysosomal degradation. Post-translationally, autophosphorylated in response to ligand binding on Tyr-1234 and Tyr-1235 in the kinase domain leading to further phosphorylation of Tyr-1349 and Tyr-1356 in the C-terminal multifunctional docking site. Dephosphorylated by PTPRJ at Tyr-1349 and Tyr-1365. Dephosphorylated by PTPN1 and PTPN2. In terms of processing, ubiquitinated. Ubiquitination by CBL regulates the receptor stability and activity through proteasomal degradation. O-mannosylation of IPT/TIG domains by TMEM260 is required for protein maturation. O-mannosylated residues are composed of single mannose glycans that are not elongated or modified.

It is found in the membrane. The catalysed reaction is L-tyrosyl-[protein] + ATP = O-phospho-L-tyrosyl-[protein] + ADP + H(+). Its activity is regulated as follows. In its inactive state, the C-terminal tail interacts with the catalytic domain and inhibits the kinase activity. Upon ligand binding, the C-terminal tail is displaced and becomes phosphorylated, thus increasing the kinase activity. Receptor tyrosine kinase that transduces signals from the extracellular matrix into the cytoplasm by binding to hepatocyte growth factor/HGF ligand. Regulates many physiological processes including proliferation, scattering, morphogenesis and survival. Ligand binding at the cell surface induces autophosphorylation of MET on its intracellular domain that provides docking sites for downstream signaling molecules. Following activation by ligand, interacts with the PI3-kinase subunit PIK3R1, PLCG1, SRC, GRB2, STAT3 or the adapter GAB1. Recruitment of these downstream effectors by MET leads to the activation of several signaling cascades including the RAS-ERK, PI3 kinase-AKT, or PLCgamma-PKC. The RAS-ERK activation is associated with the morphogenetic effects while PI3K/AKT coordinates prosurvival effects. During embryonic development, MET signaling plays a role in gastrulation, development and migration of muscles and neuronal precursors, angiogenesis and kidney formation. In adults, participates in wound healing as well as organ regeneration and tissue remodeling. Also promotes differentiation and proliferation of hematopoietic cells. The polypeptide is Hepatocyte growth factor receptor (MET) (Equus caballus (Horse)).